We begin with the raw amino-acid sequence, 306 residues long: Leucotoxin LukEv (306 aa).

The signal sequence occupies residues 1–23 (MLAATLSVGLIAPLASPIQESRA).

The protein belongs to the aerolysin family. Toxicity requires sequential binding and synergistic association of a class S and a class F component which form heterooligomeric complexes. LukEv (class S) associates with LukDv (class F).

It localises to the secreted. Part of a bi-component leucotoxin that acts by forming pores in the membrane of the target cells. The activity of LukEv-LukDv to rabbit leukocytes is similar to that of the Panton-Valentine leucocidin (PVL). LukEv-LukDv is hemolytic to rabbit red blood cells although the activity is only 8% of gamma-hemolysin. The chain is Leucotoxin LukEv (lukEv) from Staphylococcus aureus (strain NCTC 8325 / PS 47).